The following is a 1015-amino-acid chain: Formate dehydrogenase, nitrate-inducible, major subunit (1015 aa).

Positions 1-33 (MDVSRRQFFKICAGGMAGTTVAALGFAPKQALA) form a signal peptide, tat-type signal. The 4Fe-4S Mo/W bis-MGD-type domain maps to 43-106 (AKEIRNTCTY…GLLDYVNSEN (64 aa)). 4 residues coordinate [4Fe-4S] cluster: cysteine 50, cysteine 53, cysteine 57, and cysteine 92. Selenocysteine 196 provides a ligand contact to Mo-bis(molybdopterin guanine dinucleotide). Position 196 (selenocysteine 196) is a non-standard amino acid, selenocysteine.

This sequence belongs to the prokaryotic molybdopterin-containing oxidoreductase family. As to quaternary structure, trimer of heterotrimers, consisting of subunits alpha, beta and gamma. The cofactor is Mo-bis(molybdopterin guanine dinucleotide). Requires [4Fe-4S] cluster as cofactor. Exported by the Tat system. The position of the signal peptide cleavage has not been experimentally proven.

The protein localises to the periplasm. The catalysed reaction is a quinone + formate + H(+) = a quinol + CO2. Formate dehydrogenase allows E.coli to use formate as major electron donor during anaerobic respiration, when nitrate is used as electron acceptor. The alpha subunit FdnG contains the formate oxidation site. Electrons are transferred from formate to menaquinone in the gamma subunit (FdnI), through the 4Fe-4S clusters in the beta subunit (FdnH). Formate dehydrogenase-N is part of a system that generates proton motive force, together with the dissimilatory nitrate reductase (Nar). This is Formate dehydrogenase, nitrate-inducible, major subunit (fdnG) from Escherichia coli (strain K12).